Reading from the N-terminus, the 169-residue chain is Peptide deformylase (169 aa).

Positions 94 and 136 each coordinate Fe cation. The active site involves glutamate 137. Fe cation is bound at residue histidine 140.

Belongs to the polypeptide deformylase family. It depends on Fe(2+) as a cofactor.

It catalyses the reaction N-terminal N-formyl-L-methionyl-[peptide] + H2O = N-terminal L-methionyl-[peptide] + formate. Functionally, removes the formyl group from the N-terminal Met of newly synthesized proteins. Requires at least a dipeptide for an efficient rate of reaction. N-terminal L-methionine is a prerequisite for activity but the enzyme has broad specificity at other positions. This is Peptide deformylase from Desulfotalea psychrophila (strain LSv54 / DSM 12343).